The chain runs to 140 residues: Cystatin-C (140 aa).

Residues 1–20 (MASPLRSLMLLLAVLAVAWA) form the signal peptide. Positions 75-79 (QLVAG) match the Secondary area of contact motif. Intrachain disulfides connect Cys-93–Cys-103 and Cys-117–Cys-137. Asn-99 carries N-linked (GlcNAc...) asparagine glycosylation.

This sequence belongs to the cystatin family.

The protein resides in the secreted. As an inhibitor of cysteine proteinases, this protein is thought to serve an important physiological role as a local regulator of this enzyme activity. Known to inhibit cathepsin B, H, and L. The chain is Cystatin-C (Cst3) from Rattus norvegicus (Rat).